A 319-amino-acid polypeptide reads, in one-letter code: GTP 3',8-cyclase (319 aa).

The 224-residue stretch at 4–227 (KHGRKINYLR…VETEKSSTAL (224 aa)) folds into the Radical SAM core domain. Arg13 contacts GTP. The [4Fe-4S] cluster site is built by Cys20 and Cys24. Tyr26 serves as a coordination point for S-adenosyl-L-methionine. Position 27 (Cys27) interacts with [4Fe-4S] cluster. Arg63 serves as a coordination point for GTP. Residue Gly67 participates in S-adenosyl-L-methionine binding. Residue Thr94 coordinates GTP. Ser118 lines the S-adenosyl-L-methionine pocket. Residue Lys155 participates in GTP binding. Met189 is an S-adenosyl-L-methionine binding site. Residues Cys249 and Cys252 each coordinate [4Fe-4S] cluster. 254 to 256 (RVR) provides a ligand contact to GTP. Cys266 contributes to the [4Fe-4S] cluster binding site.

This sequence belongs to the radical SAM superfamily. MoaA family. Monomer and homodimer. The cofactor is [4Fe-4S] cluster.

The catalysed reaction is GTP + AH2 + S-adenosyl-L-methionine = (8S)-3',8-cyclo-7,8-dihydroguanosine 5'-triphosphate + 5'-deoxyadenosine + L-methionine + A + H(+). It participates in cofactor biosynthesis; molybdopterin biosynthesis. Functionally, catalyzes the cyclization of GTP to (8S)-3',8-cyclo-7,8-dihydroguanosine 5'-triphosphate. In Clostridium botulinum (strain ATCC 19397 / Type A), this protein is GTP 3',8-cyclase.